The primary structure comprises 246 residues: CTD nuclear envelope phosphatase 1 homolog (246 aa).

A helical transmembrane segment spans residues 3–23 (TIAQSVFCFLAGFFNFFLLYF). Residues 53–220 (LTVKRKILVL…LNLLPFLDAL (168 aa)) enclose the FCP1 homology domain.

The protein belongs to the dullard family.

The protein resides in the membrane. It is found in the nucleus envelope. The catalysed reaction is O-phospho-L-seryl-[protein] + H2O = L-seryl-[protein] + phosphate. It carries out the reaction O-phospho-L-threonyl-[protein] + H2O = L-threonyl-[protein] + phosphate. Functionally, serine/threonine protein phosphatase that may dephosphorylate and activate lipin-like phosphatases. Lipins are phosphatidate phosphatases that catalyze the conversion of phosphatidic acid to diacylglycerol and control the metabolism of fatty acids at different levels. May indirectly modulate the lipid composition of nuclear and/or endoplasmic reticulum membranes and be required for proper nuclear membrane morphology and/or dynamics. Contributes to closure of nuclear envelope (NE) holes and prevents excess nuclear membranes after meiosis and mitosis, possibly through spatial regulation of lipin. May limit the production of endoplasmic reticulum (ER) sheets proximal to the NE to prevent the ER membranes that feed into NE openings from invading the nuclear interior and thereby restrict nuclear transport to nuclear pore complexes (NPCs). May also indirectly regulate the production of lipid droplets and triacylglycerol. This Caenorhabditis elegans protein is CTD nuclear envelope phosphatase 1 homolog (cnep-1).